Reading from the N-terminus, the 295-residue chain is Serpentine receptor class gamma-53 (295 aa).

6 helical membrane-spanning segments follow: residues 7 to 27 (IWLCYGIFSAILMIFMIVLLS), 39 to 61 (VITMDIILNLLCWVNTWPSRMVF), 121 to 141 (FYLLVYALIILYSFLAVQLLY), 173 to 193 (CFMSGYLLAIIIIALSTLYQV), 211 to 230 (MSLIAFSHTFVFTMLLAWQT), and 241 to 261 (IELLMIVSDMISFSMAYILLI).

It belongs to the nematode receptor-like protein srg family.

Its subcellular location is the membrane. This chain is Serpentine receptor class gamma-53 (srg-53), found in Caenorhabditis elegans.